Consider the following 458-residue polypeptide: Cysteine--tRNA ligase (458 aa).

A Zn(2+)-binding site is contributed by C29. The 'HIGH' region signature appears at 31 to 41 (PTVYDFLHIGN). The Zn(2+) site is built by C211, H236, and E240. Positions 269 to 273 (KMSKS) match the 'KMSKS' region motif. K272 lines the ATP pocket.

It belongs to the class-I aminoacyl-tRNA synthetase family. Monomer. Requires Zn(2+) as cofactor.

It is found in the cytoplasm. The catalysed reaction is tRNA(Cys) + L-cysteine + ATP = L-cysteinyl-tRNA(Cys) + AMP + diphosphate. This Beijerinckia indica subsp. indica (strain ATCC 9039 / DSM 1715 / NCIMB 8712) protein is Cysteine--tRNA ligase.